The sequence spans 485 residues: Alpha-amylase (485 aa).

The first 18 residues, 1-18 (MFLTSVLILCSLAALSLG), serve as a signal peptide directing secretion. At Gln19 the chain carries Pyrrolidone carboxylic acid. Residues Cys46 and Cys102 are joined by a disulfide bond. Residues Asn116, Arg164, and Asp173 each contribute to the Ca(2+) site. A disulfide bond links Cys152 and Cys166. Arg201 provides a ligand contact to chloride. Asp203 functions as the Nucleophile in the catalytic mechanism. Ca(2+) is bound at residue His207. The active-site Proton donor is the Glu240. Positions 303 and 339 each coordinate chloride. Cys439 and Cys451 are disulfide-bonded. Asn448 carries an N-linked (GlcNAc...) asparagine glycan.

Belongs to the glycosyl hydrolase 13 family. In terms of assembly, monomer. Ca(2+) serves as cofactor. Chloride is required as a cofactor. Expressed in larval and adult gut.

Its subcellular location is the secreted. It carries out the reaction Endohydrolysis of (1-&gt;4)-alpha-D-glucosidic linkages in polysaccharides containing three or more (1-&gt;4)-alpha-linked D-glucose units.. The sequence is that of Alpha-amylase from Phaedon cochleariae (Mustard beetle).